Consider the following 798-residue polypeptide: MSSNNDNSTNNKNNVNINTDNRLYQLDELISDIYKAVYIKDNDYTIKFIDVKDINLPRFKLSDYDLDIIFDKIKYAGSFPTGIVIDGTSTNEIWFKRRGETEMSTIRIVPYQNKEAVDDITDPINVNQIMKTLLSELVVSEKTNNILLPVINVDVLGSDLTTYGKISPYINSSDDTYYSVQVTEKYYSLKTLDQFFKDYVIEARTIKSIIYQAIDVLYQISVQYPKFKYNQLFPETIDCYLKQDNNLIIPEIKLSNFYLSSIDDLVKNSYLDSNDFTVEQIADQYGDLYQLVNYMWNNLQSSIQNFPDVIKIFDIVLPKKIRSKELYLTSELWNLLSEDEKFELKIKNLRNNHIFTSKDSLSNTTFVKSKDQPIDFSGGSEDNELSVEDFEASEDLNDIDESIPVVKNSSKIKYPHKDIGIMANNKTISDRKLTDNLSNKSSNDNTSETTSDKSYRSSNSRNSDNSKSKTTRSKTQSSDSSKSSRIPRSSESKRSTNSVVSVGSTGSDVYSDMERTEYPSRSTYKSRTINRSDSESSPVSSRTSSPVDDSRLKQSRISEDKPRKNKAYRGRRVIGQNNTASLLAALNDDNYNQGQNNVTDINSIGSMLGVSVNELASKNSNPNYSQIMQQIASQMNGQQASPNSLFGQAGNINQQLNPQQLSALLGQSYNPNTQFNQLNQLGQLGQLNSMNSINQMAQLGQMGQLGQTGQVNPMSQMSQMNTMNPMGQPNQSYNSQNDTDLLYRYMATLNQGQSGQQMDPNAIATLMQQNSTGFPSYAQLGGNVNNNNNMNRNPFFFQ.

The interval lysine 432–valine 573 is disordered. 4 stretches are compositionally biased toward low complexity: residues serine 438–threonine 449, arginine 456–asparagine 465, serine 473–proline 487, and serine 495–tyrosine 510. Residues proline 519–isoleucine 529 are compositionally biased toward polar residues. The span at glutamate 535 to valine 547 shows a compositional bias: low complexity. Over residues aspartate 548–proline 562 the composition is skewed to basic and acidic residues. Basic residues predominate over residues arginine 563–arginine 572.

It localises to the virion. This is an uncharacterized protein from Acanthamoeba polyphaga (Amoeba).